Reading from the N-terminus, the 123-residue chain is Small ribosomal subunit protein uS12c (123 aa).

This sequence belongs to the universal ribosomal protein uS12 family. In terms of assembly, part of the 30S ribosomal subunit.

It localises to the plastid. The protein localises to the chloroplast. Its function is as follows. With S4 and S5 plays an important role in translational accuracy. Located at the interface of the 30S and 50S subunits. The protein is Small ribosomal subunit protein uS12c (rps12) of Pinus thunbergii (Japanese black pine).